Consider the following 1370-residue polypeptide: DNA-directed RNA polymerase subunit beta (1370 aa).

It belongs to the RNA polymerase beta chain family. In terms of assembly, the RNAP catalytic core consists of 2 alpha, 1 beta, 1 beta' and 1 omega subunit. When a sigma factor is associated with the core the holoenzyme is formed, which can initiate transcription.

The enzyme catalyses RNA(n) + a ribonucleoside 5'-triphosphate = RNA(n+1) + diphosphate. Its function is as follows. DNA-dependent RNA polymerase catalyzes the transcription of DNA into RNA using the four ribonucleoside triphosphates as substrates. This chain is DNA-directed RNA polymerase subunit beta, found in Bordetella pertussis (strain Tohama I / ATCC BAA-589 / NCTC 13251).